The primary structure comprises 227 residues: Enolase-phosphatase E1 (227 aa).

Belongs to the HAD-like hydrolase superfamily. MasA/MtnC family. In terms of assembly, monomer. Requires Mg(2+) as cofactor.

The enzyme catalyses 5-methylsulfanyl-2,3-dioxopentyl phosphate + H2O = 1,2-dihydroxy-5-(methylsulfanyl)pent-1-en-3-one + phosphate. It functions in the pathway amino-acid biosynthesis; L-methionine biosynthesis via salvage pathway; L-methionine from S-methyl-5-thio-alpha-D-ribose 1-phosphate: step 3/6. The protein operates within amino-acid biosynthesis; L-methionine biosynthesis via salvage pathway; L-methionine from S-methyl-5-thio-alpha-D-ribose 1-phosphate: step 4/6. Its function is as follows. Bifunctional enzyme that catalyzes the enolization of 2,3-diketo-5-methylthiopentyl-1-phosphate (DK-MTP-1-P) into the intermediate 2-hydroxy-3-keto-5-methylthiopentenyl-1-phosphate (HK-MTPenyl-1-P), which is then dephosphorylated to form the acireductone 1,2-dihydroxy-3-keto-5-methylthiopentene (DHK-MTPene). The polypeptide is Enolase-phosphatase E1 (Gluconobacter oxydans (strain 621H) (Gluconobacter suboxydans)).